The chain runs to 222 residues: Transcriptional regulatory protein PmrA (222 aa).

Residues 2–116 (KLLIVEDDKL…ELQARVRALI (115 aa)) enclose the Response regulatory domain. D51 carries the post-translational modification 4-aspartylphosphate. The segment at residues 124 to 218 (NSKIQVDNIT…LRGFGYLLTK (95 aa)) is a DNA-binding region (ompR/PhoB-type).

Post-translationally, phosphorylated by PmrB.

It is found in the cytoplasm. Member of the two-component regulatory system PmrB/PmrA involved in regulation of virulence. Unphosphorylated PmrA represses extracellular enzyme genes. Phosphorylation of PmrA by PmrB relieves such repression, which leads to activation of extracellular enzyme genes. Phosphorylated PmrA seems to repress expression of the pmrCAB operon. The protein is Transcriptional regulatory protein PmrA (pmrA) of Pectobacterium parmentieri.